Here is a 287-residue protein sequence, read N- to C-terminus: D-apionate oxidoisomerase (287 aa).

NAD(+) contacts are provided by residues 13–15 (GKM), E36, and D71. Zn(2+) is bound by residues H116 and E186.

It belongs to the ApnO family. The cofactor is Zn(2+).

It carries out the reaction D-apionate + NAD(+) = 3-oxoisoapionate + NADH + H(+). It participates in carbohydrate metabolism. In terms of biological role, involved in catabolism of D-apiose. Catalyzes the conversion of D-apionate to 3-oxo-isoapionate. The protein is D-apionate oxidoisomerase of Blautia hydrogenotrophica (strain DSM 10507 / JCM 14656 / S5a33) (Ruminococcus hydrogenotrophicus).